Here is a 277-residue protein sequence, read N- to C-terminus: Thymidylate synthase (277 aa).

Arginine 21 provides a ligand contact to dUMP. Histidine 51 provides a ligand contact to (6R)-5,10-methylene-5,6,7,8-tetrahydrofolate. Residue 126–127 participates in dUMP binding; it reads RR. Cysteine 159 acts as the Nucleophile in catalysis. Residues 179–182, asparagine 190, and 220–222 contribute to the dUMP site; these read RSAD and HLY. Aspartate 182 contributes to the (6R)-5,10-methylene-5,6,7,8-tetrahydrofolate binding site. Alanine 276 is a (6R)-5,10-methylene-5,6,7,8-tetrahydrofolate binding site.

It belongs to the thymidylate synthase family. Bacterial-type ThyA subfamily. Homodimer.

It is found in the cytoplasm. The enzyme catalyses dUMP + (6R)-5,10-methylene-5,6,7,8-tetrahydrofolate = 7,8-dihydrofolate + dTMP. Its pathway is pyrimidine metabolism; dTTP biosynthesis. Catalyzes the reductive methylation of 2'-deoxyuridine-5'-monophosphate (dUMP) to 2'-deoxythymidine-5'-monophosphate (dTMP) while utilizing 5,10-methylenetetrahydrofolate (mTHF) as the methyl donor and reductant in the reaction, yielding dihydrofolate (DHF) as a by-product. This enzymatic reaction provides an intracellular de novo source of dTMP, an essential precursor for DNA biosynthesis. The sequence is that of Thymidylate synthase from Thioalkalivibrio sulfidiphilus (strain HL-EbGR7).